The sequence spans 199 residues: N-(5'-phosphoribosyl)anthranilate isomerase (199 aa).

This sequence belongs to the TrpF family.

It carries out the reaction N-(5-phospho-beta-D-ribosyl)anthranilate = 1-(2-carboxyphenylamino)-1-deoxy-D-ribulose 5-phosphate. Its pathway is amino-acid biosynthesis; L-tryptophan biosynthesis; L-tryptophan from chorismate: step 3/5. In Streptococcus pneumoniae (strain Taiwan19F-14), this protein is N-(5'-phosphoribosyl)anthranilate isomerase.